The primary structure comprises 580 residues: Laccase-20 (580 aa).

A signal peptide spans 1 to 23 (MVASLLCTVAVAVLAVAAVGGEA). Plastocyanin-like domains follow at residues 31–147 (VVHE…PRDG) and 156–310 (KDVP…YTSA). N-linked (GlcNAc...) asparagine glycosylation is found at N36 and N42. Cu cation-binding residues include H81 and H83. Residue N115 is glycosylated (N-linked (GlcNAc...) asparagine). Residues H126 and H128 each contribute to the Cu cation site. N-linked (GlcNAc...) asparagine glycosylation is found at N200, N339, N392, N429, and N460. The Plastocyanin-like 3 domain maps to 419–561 (DFPVRPPRPY…ATAFIVEDGP (143 aa)). The Cu cation site is built by N478, H481, H483, H540, C541, H542, H546, and M551. Residues 560–580 (GPTPETSLPPPPPEFKRCDAS) are disordered.

This sequence belongs to the multicopper oxidase family. The cofactor is Cu cation.

The protein resides in the secreted. Its subcellular location is the extracellular space. The protein localises to the apoplast. It carries out the reaction 4 hydroquinone + O2 = 4 benzosemiquinone + 2 H2O. Its function is as follows. Lignin degradation and detoxification of lignin-derived products. This chain is Laccase-20 (LAC20), found in Oryza sativa subsp. indica (Rice).